The primary structure comprises 166 residues: NAD(P)H-quinone oxidoreductase subunit I, chloroplastic (166 aa).

4Fe-4S ferredoxin-type domains are found at residues 55–84 (GRIHFEFDKCIACEVCVRVCPIDLPVVDWK) and 95–124 (LNYSIDFGICIFCGNCVEYCPTNCLSMTEE). [4Fe-4S] cluster contacts are provided by C64, C67, C70, C74, C104, C107, C110, and C114.

It belongs to the complex I 23 kDa subunit family. NDH is composed of at least 16 different subunits, 5 of which are encoded in the nucleus. [4Fe-4S] cluster serves as cofactor.

The protein resides in the plastid. It localises to the chloroplast thylakoid membrane. The catalysed reaction is a plastoquinone + NADH + (n+1) H(+)(in) = a plastoquinol + NAD(+) + n H(+)(out). The enzyme catalyses a plastoquinone + NADPH + (n+1) H(+)(in) = a plastoquinol + NADP(+) + n H(+)(out). Functionally, NDH shuttles electrons from NAD(P)H:plastoquinone, via FMN and iron-sulfur (Fe-S) centers, to quinones in the photosynthetic chain and possibly in a chloroplast respiratory chain. The immediate electron acceptor for the enzyme in this species is believed to be plastoquinone. Couples the redox reaction to proton translocation, and thus conserves the redox energy in a proton gradient. The sequence is that of NAD(P)H-quinone oxidoreductase subunit I, chloroplastic from Chamaechaenactis scaposa (Fullstem).